Here is a 199-residue protein sequence, read N- to C-terminus: MLLPDLHPYTILLSIFLVLVVKQLVATIGKSTIQEFVWLVYLKVSSNQSIKTYNSKQHELHETNRQKRAISAQDEYAKWTKLNRQADKLSAELQKLNQEIQQQKSSIDKASNALILVLTTLPIWIARVFYRKTHLFYIRQGIFPKYVEWVLALPFLPNGAVGLTIWMFAVNSVVSNFSFLVSFPFAKRVSKPVRDTKVE.

Residues 1–11 lie on the Lumenal side of the membrane; the sequence is MLLPDLHPYTI. The helical transmembrane segment at 12–31 threads the bilayer; that stretch reads LLSIFLVLVVKQLVATIGKS. Over 32–115 the chain is Cytoplasmic; it reads TIQEFVWLVY…SIDKASNALI (84 aa). Residues 76–116 adopt a coiled-coil conformation; it reads YAKWTKLNRQADKLSAELQKLNQEIQQQKSSIDKASNALIL. A helical transmembrane segment spans residues 116-136; sequence LVLTTLPIWIARVFYRKTHLF. The Lumenal segment spans residues 137–160; the sequence is YIRQGIFPKYVEWVLALPFLPNGA. Residues 161-177 traverse the membrane as a helical segment; that stretch reads VGLTIWMFAVNSVVSNF. Topologically, residues 178–199 are cytoplasmic; that stretch reads SFLVSFPFAKRVSKPVRDTKVE.

The protein belongs to the WRB/GET1 family. In terms of assembly, component of the Golgi to ER traffic (GET) complex, which is composed of GET1, GET2 and GET3. Within the complex, GET1 and GET2 form a heterotetramer which is stabilized by phosphatidylinositol binding and which binds to the GET3 homodimer.

The protein resides in the endoplasmic reticulum membrane. It localises to the golgi apparatus membrane. Its function is as follows. Required for the post-translational delivery of tail-anchored (TA) proteins to the endoplasmic reticulum. Together with GET2, acts as a membrane receptor for soluble GET3, which recognizes and selectively binds the transmembrane domain of TA proteins in the cytosol. The GET complex cooperates with the HDEL receptor ERD2 to mediate the ATP-dependent retrieval of resident ER proteins that contain a C-terminal H-D-E-L retention signal from the Golgi to the ER. In Candida albicans (strain WO-1) (Yeast), this protein is Golgi to ER traffic protein 1.